A 274-amino-acid polypeptide reads, in one-letter code: 4-hydroxy-3-methylbut-2-enyl diphosphate reductase (274 aa).

C12 is a binding site for [4Fe-4S] cluster. (2E)-4-hydroxy-3-methylbut-2-enyl diphosphate is bound by residues H36 and H70. 2 residues coordinate dimethylallyl diphosphate: H36 and H70. Isopentenyl diphosphate-binding residues include H36 and H70. C92 is a [4Fe-4S] cluster binding site. H120 is a binding site for (2E)-4-hydroxy-3-methylbut-2-enyl diphosphate. H120 lines the dimethylallyl diphosphate pocket. Residue H120 participates in isopentenyl diphosphate binding. Residue E122 is the Proton donor of the active site. T158 provides a ligand contact to (2E)-4-hydroxy-3-methylbut-2-enyl diphosphate. C186 serves as a coordination point for [4Fe-4S] cluster. The (2E)-4-hydroxy-3-methylbut-2-enyl diphosphate site is built by S214, S215, N216, and S258. Dimethylallyl diphosphate-binding residues include S214, S215, N216, and S258. S214, S215, N216, and S258 together coordinate isopentenyl diphosphate.

Belongs to the IspH family. [4Fe-4S] cluster serves as cofactor.

It carries out the reaction isopentenyl diphosphate + 2 oxidized [2Fe-2S]-[ferredoxin] + H2O = (2E)-4-hydroxy-3-methylbut-2-enyl diphosphate + 2 reduced [2Fe-2S]-[ferredoxin] + 2 H(+). The catalysed reaction is dimethylallyl diphosphate + 2 oxidized [2Fe-2S]-[ferredoxin] + H2O = (2E)-4-hydroxy-3-methylbut-2-enyl diphosphate + 2 reduced [2Fe-2S]-[ferredoxin] + 2 H(+). It participates in isoprenoid biosynthesis; dimethylallyl diphosphate biosynthesis; dimethylallyl diphosphate from (2E)-4-hydroxy-3-methylbutenyl diphosphate: step 1/1. The protein operates within isoprenoid biosynthesis; isopentenyl diphosphate biosynthesis via DXP pathway; isopentenyl diphosphate from 1-deoxy-D-xylulose 5-phosphate: step 6/6. Catalyzes the conversion of 1-hydroxy-2-methyl-2-(E)-butenyl 4-diphosphate (HMBPP) into a mixture of isopentenyl diphosphate (IPP) and dimethylallyl diphosphate (DMAPP). Acts in the terminal step of the DOXP/MEP pathway for isoprenoid precursor biosynthesis. The chain is 4-hydroxy-3-methylbut-2-enyl diphosphate reductase from Campylobacter curvus (strain 525.92).